The primary structure comprises 259 residues: MSGHSKWATTKHKKAAIDAKRGKLFAKLIKNIEIAAKMGGPDPAGNPTLYDAIQKAKKQSVPNKNIDSAVKRGGGLESGGVDYETIMYEAYGPQGVALLVECLTDNRNRAAMEVRTAVTRNGGTMADPGSVSRLFTRKGVVVVEKEQERGGKPWEISEDDILEATLDAGAEEVDDLGESFEIQSEASDVVAVRTALQAAGIDYDSAEVQFVATLDIPVAETDVAGKVFRLIDAVDDLDDVQNVFTNADIPDDVLDSIDA.

Belongs to the TACO1 family.

It is found in the cytoplasm. The chain is Probable transcriptional regulatory protein Noca_2383 from Nocardioides sp. (strain ATCC BAA-499 / JS614).